The following is a 109-amino-acid chain: Spermidine export protein MdtI (109 aa).

Over 1-5 (MAQFE) the chain is Periplasmic. Residues 6-26 (WVHAAWLALAIVLEIIANVFL) form a helical membrane-spanning segment. Over 27-35 (KFSDGFRRK) the chain is Cytoplasmic. A helical transmembrane segment spans residues 36–56 (IFGLLSLAAVLAAFSALSQAV). The Periplasmic segment spans residues 57–63 (KGIDLSV). Residues 64 to 84 (AYALWGGFGIAATLAAGWILF) form a helical membrane-spanning segment. Residues 85–87 (GQR) are Cytoplasmic-facing. A helical transmembrane segment spans residues 88–108 (LNRKGWIGLVLLLAGMIMVKL). Ala109 is a topological domain (periplasmic).

The protein belongs to the drug/metabolite transporter (DMT) superfamily. Small multidrug resistance (SMR) (TC 2.A.7.1) family. MdtI subfamily. Forms a complex with MdtJ.

It is found in the cell inner membrane. Functionally, catalyzes the excretion of spermidine. In Escherichia coli O6:H1 (strain CFT073 / ATCC 700928 / UPEC), this protein is Spermidine export protein MdtI (mdtI).